Reading from the N-terminus, the 309-residue chain is Foldase protein PrsA 2 (309 aa).

The N-terminal stretch at 1 to 22 is a signal peptide; it reads MKQMNKLITGVVTLATVVTLSA. A lipid anchor (N-palmitoyl cysteine) is attached at Cys23. Cys23 is lipidated: S-diacylglycerol cysteine. The PpiC domain occupies 146 to 241; that stretch reads TPTMTAEIMQ…RTYHIIKVTK (96 aa).

Belongs to the PrsA family.

The protein resides in the cell membrane. The enzyme catalyses [protein]-peptidylproline (omega=180) = [protein]-peptidylproline (omega=0). Its function is as follows. Plays a major role in protein secretion by helping the post-translocational extracellular folding of several secreted proteins. This is Foldase protein PrsA 2 (prsA2) from Streptococcus pyogenes serotype M3 (strain ATCC BAA-595 / MGAS315).